The chain runs to 249 residues: Hydroxyacylglutathione hydrolase (249 aa).

Zn(2+)-binding residues include His54, His56, Asp58, His59, His113, Asp138, and His176.

Belongs to the metallo-beta-lactamase superfamily. Glyoxalase II family. In terms of assembly, monomer. It depends on Zn(2+) as a cofactor.

The enzyme catalyses an S-(2-hydroxyacyl)glutathione + H2O = a 2-hydroxy carboxylate + glutathione + H(+). The protein operates within secondary metabolite metabolism; methylglyoxal degradation; (R)-lactate from methylglyoxal: step 2/2. Thiolesterase that catalyzes the hydrolysis of S-D-lactoyl-glutathione to form glutathione and D-lactic acid. The protein is Hydroxyacylglutathione hydrolase of Parasynechococcus marenigrum (strain WH8102).